The chain runs to 397 residues: Phosphoglycerate kinase (397 aa).

Substrate-binding positions include 21-23 (DFN), Arg-37, 60-63 (HLGR), Arg-119, and Arg-152. ATP-binding positions include Lys-202, Gly-294, Glu-325, and 351-354 (GGDS).

It belongs to the phosphoglycerate kinase family. As to quaternary structure, monomer.

The protein resides in the cytoplasm. It carries out the reaction (2R)-3-phosphoglycerate + ATP = (2R)-3-phospho-glyceroyl phosphate + ADP. The protein operates within carbohydrate degradation; glycolysis; pyruvate from D-glyceraldehyde 3-phosphate: step 2/5. The sequence is that of Phosphoglycerate kinase from Pseudothermotoga lettingae (strain ATCC BAA-301 / DSM 14385 / NBRC 107922 / TMO) (Thermotoga lettingae).